The primary structure comprises 68 residues: Alpha-conotoxin-like Lp1.2 (68 aa).

The N-terminal stretch at 1 to 21 (MGMRMMFTVFLLVVLATTVVS) is a signal peptide. The propeptide occupies 22–48 (FTSDRAFDGRNAAASDKASDLISLAVR). 2 disulfides stabilise this stretch: Cys50-Cys56 and Cys51-Cys64. The tract at residues 52-54 (SHP) is ser-Xaa-Pro motif, crucial for potent interaction with nAChR. Cysteine amide is present on Cys64. The propeptide occupies 65 to 68 (GGKR).

This sequence belongs to the conotoxin A superfamily. As to expression, expressed by the venom duct.

Its subcellular location is the secreted. Functionally, alpha-conotoxins act on postsynaptic membranes, they bind to the nicotinic acetylcholine receptors (nAChR) and thus inhibit them. This chain is Alpha-conotoxin-like Lp1.2, found in Conus leopardus (Leopard cone).